Here is a 322-residue protein sequence, read N- to C-terminus: Aspartate carbamoyltransferase catalytic subunit (322 aa).

Carbamoyl phosphate-binding residues include Arg-70 and Thr-71. Residue Lys-98 participates in L-aspartate binding. 3 residues coordinate carbamoyl phosphate: Arg-120, His-150, and Gln-153. L-aspartate contacts are provided by Arg-184 and Arg-239. Carbamoyl phosphate is bound by residues Gly-280 and Pro-281.

This sequence belongs to the aspartate/ornithine carbamoyltransferase superfamily. ATCase family. As to quaternary structure, heterododecamer (2C3:3R2) of six catalytic PyrB chains organized as two trimers (C3), and six regulatory PyrI chains organized as three dimers (R2).

It carries out the reaction carbamoyl phosphate + L-aspartate = N-carbamoyl-L-aspartate + phosphate + H(+). The protein operates within pyrimidine metabolism; UMP biosynthesis via de novo pathway; (S)-dihydroorotate from bicarbonate: step 2/3. Functionally, catalyzes the condensation of carbamoyl phosphate and aspartate to form carbamoyl aspartate and inorganic phosphate, the committed step in the de novo pyrimidine nucleotide biosynthesis pathway. The protein is Aspartate carbamoyltransferase catalytic subunit of Xylella fastidiosa (strain 9a5c).